The following is a 408-amino-acid chain: Multidrug resistance protein MdtG (408 aa).

11 consecutive transmembrane segments (helical) span residues 16–36 (LIVA…VMPF), 58–78 (IVFS…GGLA), 92–112 (LGMG…QFLI), 115–135 (ALLG…ATQV), 146–166 (TLST…GLLA), 173–193 (PVFF…LFCI), 224–244 (LFVT…ILTL), 256–276 (VAFI…LSAP), 290–310 (ILIT…YVQT), 319–339 (FLLG…LVYN), and 378–398 (AVFL…WNSL).

Belongs to the major facilitator superfamily. DHA1 family. MdtG (TC 2.A.1.2.20) subfamily.

Its subcellular location is the cell inner membrane. Confers resistance to fosfomycin and deoxycholate. The protein is Multidrug resistance protein MdtG of Escherichia coli O7:K1 (strain IAI39 / ExPEC).